A 335-amino-acid chain; its full sequence is Dihydroorotate dehydrogenase (quinone) (335 aa).

FMN is bound by residues 59-63 and Thr-83; that span reads AGLDK. Substrate is bound at residue Lys-63. 108–112 contacts substrate; sequence NRMGF. Residues Asn-136 and Asn-169 each coordinate FMN. Asn-169 serves as a coordination point for substrate. Ser-172 acts as the Nucleophile in catalysis. Asn-174 contacts substrate. Residues Lys-214 and Thr-242 each coordinate FMN. 243 to 244 contacts substrate; the sequence is NT. FMN-binding positions include Gly-265, Gly-294, and 315–316; that span reads YS.

It belongs to the dihydroorotate dehydrogenase family. Type 2 subfamily. Monomer. Requires FMN as cofactor.

Its subcellular location is the cell membrane. The catalysed reaction is (S)-dihydroorotate + a quinone = orotate + a quinol. It participates in pyrimidine metabolism; UMP biosynthesis via de novo pathway; orotate from (S)-dihydroorotate (quinone route): step 1/1. In terms of biological role, catalyzes the conversion of dihydroorotate to orotate with quinone as electron acceptor. The protein is Dihydroorotate dehydrogenase (quinone) of Neisseria meningitidis serogroup A / serotype 4A (strain DSM 15465 / Z2491).